A 268-amino-acid polypeptide reads, in one-letter code: Unknown seed protein 30.1 (268 aa).

The signal sequence occupies residues 1 to 22 (MEFAHLTVLSLFCLAFVGITAT). Residues 68 to 259 (LFFEHDLHPR…GNKAAAWVPN (192 aa)) form the BURP domain.

The chain is Unknown seed protein 30.1 from Vicia faba (Broad bean).